The following is a 307-amino-acid chain: Serine/threonine-protein phosphatase PP2A-3 catalytic subunit (307 aa).

Mn(2+) is bound by residues Asp-55, His-57, Asp-83, and Asn-115. Residue His-116 is the Proton donor of the active site. The Mn(2+) site is built by His-165 and His-239.

It belongs to the PPP phosphatase family. PP-2A subfamily. Mn(2+) is required as a cofactor.

The protein resides in the cytoplasm. The enzyme catalyses O-phospho-L-seryl-[protein] + H2O = L-seryl-[protein] + phosphate. The catalysed reaction is O-phospho-L-threonyl-[protein] + H2O = L-threonyl-[protein] + phosphate. This chain is Serine/threonine-protein phosphatase PP2A-3 catalytic subunit (PP2A3), found in Oryza sativa subsp. indica (Rice).